The sequence spans 635 residues: Bifunctional lysine-specific demethylase and histidyl-hydroxylase NO66 (635 aa).

Disordered stretches follow at residues 1 to 115 and 141 to 190; these read MSAV…LQNS and FNGE…KANG. The span at 84–99 shows a compositional bias: low complexity; the sequence is ASASDINTSASKNVNA. Residues 141-156 show a composition bias toward polar residues; the sequence is FNGESLKNNSNHSTPV. The JmjC domain maps to 295-440; that stretch reads CSIRMLNPQT…DLLELFFPHA (146 aa). Positions 341, 343, and 406 each coordinate Fe cation.

Belongs to the ROX family. NO66 subfamily. The cofactor is Fe(2+).

Its subcellular location is the nucleus. It carries out the reaction N(6),N(6)-dimethyl-L-lysyl(36)-[histone H3] + 2 2-oxoglutarate + 2 O2 = L-lysyl(36)-[histone H3] + 2 formaldehyde + 2 succinate + 2 CO2. Oxygenase that can act as both a histone lysine demethylase and a ribosomal histidine hydroxylase. Specifically demethylates 'Lys-4' (H3K4me) and 'Lys-36' (H3K36me) of histone H3, thereby playing a central role in histone code. The chain is Bifunctional lysine-specific demethylase and histidyl-hydroxylase NO66 from Aedes aegypti (Yellowfever mosquito).